Consider the following 147-residue polypeptide: Pathogenesis-related protein PR-4A (147 aa).

A signal peptide spans 1 to 25 (MERVNNYKLCVALLIISMVMAMAAA). Positions 26-147 (QSATNVRSTY…VNYEFVNCND (122 aa)) constitute a Barwin domain. 3 disulfides stabilise this stretch: Cys-54/Cys-86, Cys-75/Cys-109, and Cys-89/Cys-145.

Its subcellular location is the secreted. The protein localises to the cell wall. This Nicotiana tabacum (Common tobacco) protein is Pathogenesis-related protein PR-4A.